Consider the following 1634-residue polypeptide: MEKKTNKNKGVAEETKKKVAATTGFIIGQFIRFISIYYAPLYVALGRPHTITILALPYLLIHLFWNTDKSFFAYDSKKLNSIRNLEISSVFLNHFILQLLNSCILPNSTLARLITIYMFRCNNKILFLTSSFFAWFIGQIFMLNSFELVLVWIRKKNYLRSTFRNYLLRNSIFVILFNCLFGSLLFILSIQCLGRIPSPIPTQKLSEVSKIEQRERERLQSEEERDVEKKKPDYKLPDSESEILQKNESETPEFEKHLAALLFDYKRWTRPFRYIKNNRLEQALRNELSQYFFDTYQSDGKNRLSFTHPISLSTFLKMMKLKIPLLLVEKTLYNPLDNGWVSRNKKQMNYRRIYFLNRVNNLDKAVALPRIQFETTRTRLCIHNDETKQEYLPENYDPLLTGPHRGRIKRGLLTINDTLTINDTLSEHLRETIILNRLHALVLLNTNSKNFNQKMYTFEKKPLEISDFSTLSSNLNLTDPDQKTEFLVNPIETHDPNFIRKYIPIEEIRKNAPRWSYKLITELEQISYYKNPPEDHDIRSRKGISVVIFDPTKEAATTNSKTNTTKDTNLETKNKSKSDEKLVVIRYPQQSDFRQGLIKDSMRTQRRKIFLQELFNANVHSPLFFDRLRIVFSFPRLKQIFINLSARHVFGILKSTDKQTKRKRTKKEEKGENKRREQKERLEIGEAWDVFPLAQIIRGLLLLTQSFIRKKIILPSLILGKNIGRILLCQIPEWSEDLQEWNRETHIKCTYNGIPLSQKKFPENWLTEGIQIKILFPFCLKPWHAYKPRTSHYDFCFLTVWGRETEQPFGHPRKTPFFFEPVLQELDKKIVNIKARIFSKVKINLFKRVSKENDFQIRKQIMNESFRQIEEIPSCTNSSLIEKMRNMSDRTRTIKKKIERMTEDKKKVTLELYISTYKRSYRLALSKTICKMVKVLIWKFSYFQKLLNQRVYNDIFLYTIYICRMTTQLFLESTKKFISKSILKNERTKKRININKETKNKIHFLSKLKTSKNCKKNLDLSCDFSNLSQAYVFYKISQTGVLNICKLISVLQHTVISFFIQTQIKDLVHTEGIFKSEVIHQKLQWPKTSQWKNWLRLNSKYDLSPIFWFSLISQKQKWRNRVTKYHRPKEKYLNKWNSHGKYRLSDYKKQNVPKSVSNQKDNSKKCYQYDLLSYKSINYEKKSASVLYRSTPKVTKGQAIYHNDNMSQNYLFAITPNIPGKIKRVDIPYIGKNLDRKYLIWKNIHFSLRKKVDIESWVAVNTSSNKDSTIGNYNYQLIDQIDKKEKELFSLPIHQNTEINRPNSTNSLVDWMGMNEQILNRPITNLELWFFPEFVWLFNVYKTKPWIIPSKILLLNSNLSEIDSQQKSETDSETDSQQKNIAETQKYLEEDSTKSDTKKETELELELFTKKYFLFQLRGDQTFNKSFFKNIQIYCLLLRLRNRKKMTLSCIQRRKLNLRIMPSMTNLLNVPEFLKRTGLVMDPLPLSIKTDGKFLLYKIVGISLVHKSKDQTNKKYRKTRIIRAVENNHLDVLVLENILSSRCRRELRTLICFNYKNWNGVNTTSIFCSKNCNLFWEERNPRQNDKRELIQKFIWPNYRLEDLACMNRYSFDTTNGSRFSILRFHMYLPRKIHG.

5 helical membrane passes run 25 to 45, 53 to 73, 94 to 116, 133 to 153, and 172 to 192; these read FIIGQFIRFISIYYAPLYVAL, ILALPYLLIHLFWNTDKSFFA, HFILQLLNSCILPNSTLARLITI, FAWFIGQIFMLNSFELVLVWI, and IFVILFNCLFGSLLFILSIQC. Disordered regions lie at residues 216–242 and 1365–1395; these read RERLQSEEERDVEKKKPDYKLPDSESE and QQKSETDSETDSQQKNIAETQKYLEEDSTKS. Residues 1386–1395 show a composition bias toward basic and acidic residues; the sequence is KYLEEDSTKS.

Belongs to the TIC214 family. As to quaternary structure, part of the Tic complex.

It localises to the plastid. It is found in the chloroplast inner membrane. Functionally, involved in protein precursor import into chloroplasts. May be part of an intermediate translocation complex acting as a protein-conducting channel at the inner envelope. In Cuscuta exaltata (Tall dodder), this protein is Protein TIC 214.